The following is a 111-amino-acid chain: MEIEKTNRMNTLFEFYATLLTDKQMNYIELYYADDYSLAEIAEEFNISRQAVYDNIKRTEKVLESYEEKLHLFSNYVVRNQLLEELMKKYPSDQYLISKLQEIQQIDEEEF.

This sequence belongs to the UPF0122 family.

Functionally, might take part in the signal recognition particle (SRP) pathway. This is inferred from the conservation of its genetic proximity to ftsY/ffh. May be a regulatory protein. In Lactococcus lactis subsp. cremoris (strain SK11), this protein is UPF0122 protein LACR_1522.